Reading from the N-terminus, the 239-residue chain is Fumarate reductase iron-sulfur subunit (239 aa).

The 91-residue stretch at leucine 5 to proline 95 folds into the 2Fe-2S ferredoxin-type domain. 4 residues coordinate [2Fe-2S] cluster: cysteine 57, cysteine 62, cysteine 65, and cysteine 77. The 30-residue stretch at alanine 142–valine 171 folds into the 4Fe-4S ferredoxin-type domain. The [4Fe-4S] cluster site is built by cysteine 151, cysteine 154, and cysteine 157. [3Fe-4S] cluster is bound by residues cysteine 161, cysteine 208, and cysteine 214. Position 218 (cysteine 218) interacts with [4Fe-4S] cluster.

Belongs to the succinate dehydrogenase/fumarate reductase iron-sulfur protein family. In terms of assembly, part of an enzyme complex containing three subunits: a flavoprotein (frdA), an iron-sulfur protein (frdB), and diheme cytochrome b (frdC). [2Fe-2S] cluster is required as a cofactor. Requires [3Fe-4S] cluster as cofactor. It depends on [4Fe-4S] cluster as a cofactor.

It localises to the cell inner membrane. It carries out the reaction a menaquinone + succinate = a menaquinol + fumarate. The fumarate reductase enzyme complex is required for fumarate respiration using formate or sulfide as electron donor. This chain is Fumarate reductase iron-sulfur subunit (frdB), found in Wolinella succinogenes (strain ATCC 29543 / DSM 1740 / CCUG 13145 / JCM 31913 / LMG 7466 / NCTC 11488 / FDC 602W) (Vibrio succinogenes).